Here is a 185-residue protein sequence, read N- to C-terminus: Ribosome-recycling factor (185 aa).

The protein belongs to the RRF family.

Its subcellular location is the cytoplasm. Functionally, responsible for the release of ribosomes from messenger RNA at the termination of protein biosynthesis. May increase the efficiency of translation by recycling ribosomes from one round of translation to another. The sequence is that of Ribosome-recycling factor from Corynebacterium diphtheriae (strain ATCC 700971 / NCTC 13129 / Biotype gravis).